The chain runs to 127 residues: Stationary phase protein 3 (127 aa).

2 helical membrane passes run 29–49 (LFLF…FYVI) and 63–83 (ANSI…CFFL). Asn86 carries N-linked (GlcNAc...) asparagine glycosylation.

The protein resides in the membrane. Its function is as follows. Required for survival during stationary phase. The protein is Stationary phase protein 3 (SPG3) of Saccharomyces cerevisiae (strain ATCC 204508 / S288c) (Baker's yeast).